A 27-amino-acid polypeptide reads, in one-letter code: Conotoxin flf14a (27 aa).

2 disulfide bridges follow: Cys6–Cys26 and Cys10–Cys22.

In terms of tissue distribution, expressed by the venom duct.

It is found in the secreted. This is Conotoxin flf14a from Conus anabathrum floridanus (Florida cone).